Here is a 767-residue protein sequence, read N- to C-terminus: Cilia- and flagella-associated protein 91 (767 aa).

The segment at methionine 1 to serine 29 is disordered.

Belongs to the CFAP91 family. In terms of assembly, interacts with MYCBP and AKAP1. Part of a complex containing MYCBP, AKAP1 and PRKAR2B. Interacts with CFAP61. Does not interact with MYCBP. Post-translationally, phosphorylated by PKA. In terms of tissue distribution, strongly expressed in the liver. As to expression, widely expressed, but strongly expressed in all spermatogenesis-related tissues, including the testis, the epithelium of cauda and the corpus epididymis, as well as the spermatid and mature sperm. Also expressed in Leydig cells.

It is found in the mitochondrion. Its subcellular location is the cytoplasm. It localises to the cytoskeleton. The protein resides in the cilium axoneme. Functionally, involved in sperm flagellum axonemal organization and function. May regulate cilium motility through its role in the assembly of the axonemal radial spokes. The polypeptide is Cilia- and flagella-associated protein 91 (Homo sapiens (Human)).